Reading from the N-terminus, the 293-residue chain is Phosphate import ATP-binding protein PstB (293 aa).

The ABC transporter domain maps to 46–288; the sequence is FGIRGVDVFY…PDHELTEAYI (243 aa). Position 78–85 (78–85) interacts with ATP; sequence GPSGCGKS.

The protein belongs to the ABC transporter superfamily. Phosphate importer (TC 3.A.1.7) family. As to quaternary structure, the complex is composed of two ATP-binding proteins (PstB), two transmembrane proteins (PstC and PstA) and a solute-binding protein (PstS).

It is found in the cell inner membrane. It carries out the reaction phosphate(out) + ATP + H2O = ADP + 2 phosphate(in) + H(+). Its function is as follows. Part of the ABC transporter complex PstSACB involved in phosphate import. Responsible for energy coupling to the transport system. In Saccharophagus degradans (strain 2-40 / ATCC 43961 / DSM 17024), this protein is Phosphate import ATP-binding protein PstB.